The sequence spans 239 residues: EF-hand domain-containing protein D1 (239 aa).

A compositionally biased stretch (basic and acidic residues) spans 1-18; the sequence is MASEELACKLERRLRREE. Residues 1 to 53 form a disordered region; sequence MASEELACKLERRLRREEAEESGPQLAPLGAPAPEPKPEPEPPARAPTASADA. EF-hand domains follow at residues 90–125 and 126–161; these read RLIK…LGAP and QTHL…AAAG. Ca(2+) contacts are provided by Asp-103, Asp-107, Glu-114, Asp-139, Asp-141, Asp-143, Lys-145, and Glu-150. A Phosphoserine modification is found at Ser-201.

The protein localises to the mitochondrion inner membrane. Acts as a calcium sensor for mitochondrial flash (mitoflash) activation, an event characterized by stochastic bursts of superoxide production. May play a role in neuronal differentiation. The chain is EF-hand domain-containing protein D1 (EFHD1) from Homo sapiens (Human).